A 204-amino-acid chain; its full sequence is Recombination protein RecR (204 aa).

The C4-type zinc finger occupies Cys-63–Cys-78. A Toprim domain is found at Asn-86–Pro-181.

The protein belongs to the RecR family.

Functionally, may play a role in DNA repair. It seems to be involved in an RecBC-independent recombinational process of DNA repair. It may act with RecF and RecO. This chain is Recombination protein RecR, found in Dehalococcoides mccartyi (strain ATCC BAA-2266 / KCTC 15142 / 195) (Dehalococcoides ethenogenes (strain 195)).